The following is a 446-amino-acid chain: DDB1- and CUL4-associated factor 12-A (446 aa).

A compositionally biased stretch (basic residues) spans 1-12 (MTRRSVSRKRRA). The disordered stretch occupies residues 1–32 (MTRRSVSRKRRANPGSGPGEQSDWDHSAHKRK). WD repeat units lie at residues 132 to 173 (SHQS…PVCV), 177 to 215 (GHND…VNKS), 245 to 284 (PVNC…SKLL), and 333 to 370 (EQGS…FLED).

It belongs to the WD repeat DCAF12 family. Component of the DCX(DCAF12) E3 ubiquitin ligase complex, at least composed of cul4 (cul4a or cul4b), ddb1, dcaf12 and rbx1.

It localises to the cytoplasm. It is found in the cytoskeleton. The protein localises to the microtubule organizing center. Its subcellular location is the centrosome. The protein resides in the nucleus. It participates in protein modification; protein ubiquitination. In terms of biological role, substrate-recognition component of a DCX (DDB1-CUL4-X-box) E3 ubiquitin-protein ligase complex of the DesCEND (destruction via C-end degrons) pathway, which recognizes a C-degron located at the extreme C terminus of target proteins, leading to their ubiquitination and degradation. The C-degron recognized by the DesCEND pathway is usually a motif of less than ten residues and can be present in full-length proteins, truncated proteins or proteolytically cleaved forms. The DCX(DCAF12) complex specifically recognizes proteins with a diglutamate (Glu-Glu) at the C-terminus leading to their ubiquitination and degradation. Also directly recognizes the C-terminal glutamate-leucine (Glu-Leu) degron as an alternative degron in proteins leading to their ubiquitination and degradation. In Xenopus laevis (African clawed frog), this protein is DDB1- and CUL4-associated factor 12-A (dcaf12-a).